We begin with the raw amino-acid sequence, 211 residues long: Small ribosomal subunit protein eS8 (211 aa).

Belongs to the eukaryotic ribosomal protein eS8 family.

The chain is Small ribosomal subunit protein eS8 (rps8) from Dictyostelium discoideum (Social amoeba).